A 107-amino-acid polypeptide reads, in one-letter code: Putative double-stranded DNA mimic protein Asuc_1259 (107 aa).

It belongs to the putative dsDNA mimic protein family.

May act as a double-stranded DNA (dsDNA) mimic. Probably regulates the activity of a dsDNA-binding protein. The polypeptide is Putative double-stranded DNA mimic protein Asuc_1259 (Actinobacillus succinogenes (strain ATCC 55618 / DSM 22257 / CCUG 43843 / 130Z)).